Consider the following 237-residue polypeptide: Ribonuclease PH (237 aa).

Phosphate-binding positions include R86 and 124–126 (GTR).

It belongs to the RNase PH family. As to quaternary structure, homohexameric ring arranged as a trimer of dimers.

The catalysed reaction is tRNA(n+1) + phosphate = tRNA(n) + a ribonucleoside 5'-diphosphate. Its function is as follows. Phosphorolytic 3'-5' exoribonuclease that plays an important role in tRNA 3'-end maturation. Removes nucleotide residues following the 3'-CCA terminus of tRNAs; can also add nucleotides to the ends of RNA molecules by using nucleoside diphosphates as substrates, but this may not be physiologically important. Probably plays a role in initiation of 16S rRNA degradation (leading to ribosome degradation) during starvation. This chain is Ribonuclease PH, found in Erythrobacter litoralis (strain HTCC2594).